Reading from the N-terminus, the 159-residue chain is Transcriptional repressor NrdR (159 aa).

Residues 1–21 (MRCPKCQHNKSNVIDSRQAED) are disordered. The segment at 3-34 (CPKCQHNKSNVIDSRQAEDGNTIRRRRECDAC) is a zinc-finger region. The 91-residue stretch at 49-139 (LLVVKKDGTR…VYRSFKDVDE (91 aa)) folds into the ATP-cone domain.

The protein belongs to the NrdR family. Requires Zn(2+) as cofactor.

Negatively regulates transcription of bacterial ribonucleotide reductase nrd genes and operons by binding to NrdR-boxes. In Streptococcus thermophilus (strain CNRZ 1066), this protein is Transcriptional repressor NrdR.